Here is a 500-residue protein sequence, read N- to C-terminus: Lysine--tRNA ligase (500 aa).

Positions 410 and 417 each coordinate Mg(2+).

The protein belongs to the class-II aminoacyl-tRNA synthetase family. As to quaternary structure, homodimer. The cofactor is Mg(2+).

Its subcellular location is the cytoplasm. The enzyme catalyses tRNA(Lys) + L-lysine + ATP = L-lysyl-tRNA(Lys) + AMP + diphosphate. The sequence is that of Lysine--tRNA ligase from Shewanella piezotolerans (strain WP3 / JCM 13877).